A 710-amino-acid chain; its full sequence is Polyribonucleotide nucleotidyltransferase (710 aa).

Mg(2+) contacts are provided by Asp488 and Asp494. The KH domain maps to 555–614 (PRIETITIPTDKIRDVIGSGGKVIREIVETTGAKVDVNDDGVIKVSSSDGASIKAALDWI). In terms of domain architecture, S1 motif spans 624 to 692 (GQIYKGKVVK…DRGKVRLSMK (69 aa)).

The protein belongs to the polyribonucleotide nucleotidyltransferase family. The cofactor is Mg(2+).

It is found in the cytoplasm. The catalysed reaction is RNA(n+1) + phosphate = RNA(n) + a ribonucleoside 5'-diphosphate. Its function is as follows. Involved in mRNA degradation. Catalyzes the phosphorolysis of single-stranded polyribonucleotides processively in the 3'- to 5'-direction. The chain is Polyribonucleotide nucleotidyltransferase from Maricaulis maris (strain MCS10) (Caulobacter maris).